Here is a 317-residue protein sequence, read N- to C-terminus: MTTALDQLKQYTTVVADTGDFQQLAQYKPQDATTNPSLILKAVQKDAYRPILEKTVRDHAGESVGFIIDRLLIAFGTEILKLIPGRVSTEVDARLSFDTQRSIDKGREIIKLYEAAGVGRERVLIKLASTWEGIRAAEVLQREGIRCNMTLLFSLVQAAACAEAGAQLISPFVGRIYDWYRKQKGADWDEAQDGGANDPGVQSVRRIYTYYKHFGYRTEVMGASFRTTSQITELAGCDLLTISPELLQKLHDSTEAVARKLSPDEARDARLERVAIDESSFRFQLNDDAMATEKLAEGIRLFSADAVKLEKMIEALR.

The Schiff-base intermediate with substrate role is filled by Lys126.

The protein belongs to the transaldolase family. Type 1 subfamily. As to quaternary structure, homodimer.

It is found in the cytoplasm. It catalyses the reaction D-sedoheptulose 7-phosphate + D-glyceraldehyde 3-phosphate = D-erythrose 4-phosphate + beta-D-fructose 6-phosphate. Its pathway is carbohydrate degradation; pentose phosphate pathway; D-glyceraldehyde 3-phosphate and beta-D-fructose 6-phosphate from D-ribose 5-phosphate and D-xylulose 5-phosphate (non-oxidative stage): step 2/3. Its function is as follows. Transaldolase is important for the balance of metabolites in the pentose-phosphate pathway. This chain is Transaldolase, found in Burkholderia mallei (strain SAVP1).